Reading from the N-terminus, the 149-residue chain is Probable ubiquitin-conjugating enzyme E2 12 (149 aa).

Residues 1-15 (MASKRISRELRDMQR) are compositionally biased toward basic and acidic residues. Residues 1-22 (MASKRISRELRDMQRHPPANCS) form a disordered region. A UBC core domain is found at 1 to 148 (MASKRISREL…AQKWTQKYAM (148 aa)). C86 acts as the Glycyl thioester intermediate in catalysis.

This sequence belongs to the ubiquitin-conjugating enzyme family. In terms of tissue distribution, ubiquitously expressed at very low levels.

It catalyses the reaction S-ubiquitinyl-[E1 ubiquitin-activating enzyme]-L-cysteine + [E2 ubiquitin-conjugating enzyme]-L-cysteine = [E1 ubiquitin-activating enzyme]-L-cysteine + S-ubiquitinyl-[E2 ubiquitin-conjugating enzyme]-L-cysteine.. Its pathway is protein modification; protein ubiquitination. Accepts the ubiquitin from the E1 complex and catalyzes its covalent attachment to other proteins. This Arabidopsis thaliana (Mouse-ear cress) protein is Probable ubiquitin-conjugating enzyme E2 12 (UBC12).